Here is a 122-residue protein sequence, read N- to C-terminus: Large ribosomal subunit protein uL18 (122 aa).

Belongs to the universal ribosomal protein uL18 family. In terms of assembly, part of the 50S ribosomal subunit; part of the 5S rRNA/L5/L18/L25 subcomplex. Contacts the 5S and 23S rRNAs.

Functionally, this is one of the proteins that bind and probably mediate the attachment of the 5S RNA into the large ribosomal subunit, where it forms part of the central protuberance. The chain is Large ribosomal subunit protein uL18 from Ruminiclostridium cellulolyticum (strain ATCC 35319 / DSM 5812 / JCM 6584 / H10) (Clostridium cellulolyticum).